The primary structure comprises 210 residues: Small ribosomal subunit protein uS4 (210 aa).

Positions 99–161 constitute an S4 RNA-binding domain; that stretch reads RRLDSVIYRM…SKNNATILSA (63 aa).

The protein belongs to the universal ribosomal protein uS4 family. As to quaternary structure, part of the 30S ribosomal subunit. Contacts protein S5. The interaction surface between S4 and S5 is involved in control of translational fidelity.

One of the primary rRNA binding proteins, it binds directly to 16S rRNA where it nucleates assembly of the body of the 30S subunit. Functionally, with S5 and S12 plays an important role in translational accuracy. The chain is Small ribosomal subunit protein uS4 from Solibacter usitatus (strain Ellin6076).